Consider the following 444-residue polypeptide: Glutamate--tRNA ligase (444 aa).

The short motif at 12–22 (PSPTGFLHVGG) is the 'HIGH' region element. A 'KMSKS' region motif is present at residues 213-217 (KMSKR). Lysine 216 contributes to the ATP binding site.

Belongs to the class-I aminoacyl-tRNA synthetase family. Glutamate--tRNA ligase type 1 subfamily. Monomer.

It localises to the cytoplasm. It carries out the reaction tRNA(Glu) + L-glutamate + ATP = L-glutamyl-tRNA(Glu) + AMP + diphosphate. Catalyzes the attachment of glutamate to tRNA(Glu) in a two-step reaction: glutamate is first activated by ATP to form Glu-AMP and then transferred to the acceptor end of tRNA(Glu). This is Glutamate--tRNA ligase from Methylacidiphilum infernorum (isolate V4) (Methylokorus infernorum (strain V4)).